The primary structure comprises 364 residues: Ferrochelatase (364 aa).

2 residues coordinate Fe cation: histidine 213 and glutamate 294.

The protein belongs to the ferrochelatase family.

It localises to the cytoplasm. It carries out the reaction heme b + 2 H(+) = protoporphyrin IX + Fe(2+). Its pathway is porphyrin-containing compound metabolism; protoheme biosynthesis; protoheme from protoporphyrin-IX: step 1/1. In terms of biological role, catalyzes the ferrous insertion into protoporphyrin IX. This chain is Ferrochelatase, found in Chromobacterium violaceum (strain ATCC 12472 / DSM 30191 / JCM 1249 / CCUG 213 / NBRC 12614 / NCIMB 9131 / NCTC 9757 / MK).